The chain runs to 362 residues: Endopolygalacturonase II (362 aa).

A signal peptide spans methionine 1–serine 20. Positions alanine 21–arginine 27 are excised as a propeptide. The cysteines at positions 30 and 45 are disulfide-linked. The stretch at serine 156–asparagine 186 is one PbH1 1 repeat. Aspartate 201 functions as the Proton donor in the catalytic mechanism. A disulfide bridge links cysteine 203 with cysteine 219. PbH1 repeat units follow at residues glycine 209 to serine 229, valine 238 to threonine 259, valine 267 to glutamine 289, and threonine 301 to alanine 322. The active site involves histidine 223. A glycan (N-linked (GlcNAc...) asparagine) is linked at asparagine 240. Cystine bridges form between cysteine 329–cysteine 334 and cysteine 353–cysteine 362.

The protein belongs to the glycosyl hydrolase 28 family.

The protein resides in the secreted. It carries out the reaction (1,4-alpha-D-galacturonosyl)n+m + H2O = (1,4-alpha-D-galacturonosyl)n + (1,4-alpha-D-galacturonosyl)m.. Involved in maceration and soft-rotting of plant tissue. Hydrolyzes the 1,4-alpha glycosidic bonds of de-esterified pectate in the smooth region of the plant cell wall. The protein is Endopolygalacturonase II (pgaII) of Aspergillus awamori (Black koji mold).